The following is a 1280-amino-acid chain: Multidrug resistance protein 1 (1280 aa).

At 1-72 (MSRAHAAYAN…YADATDRVLM (72 aa)) the chain is on the cytoplasmic side. An ABC transmembrane type-1 1 domain is found at 72–357 (MIAGTAFAVA…VAPSRTAFTE (286 aa)). The next 6 helical transmembrane spans lie at 73–93 (IAGT…SFIF), 120–140 (YVGI…TVAA), 189–209 (KLSQ…AGFV), 216–236 (LMMI…GSIV), 297–317 (LSAA…FFFG), and 326–345 (RDMA…SFGL). Residues 346 to 712 (GFVAPSRTAF…MRMNKDKAWA (367 aa)) are Cytoplasmic-facing. The region spanning 391-634 (IEFRNVRFAY…DGEFAAVAKM (244 aa)) is the ABC transporter 1 domain. 426 to 433 (GASGCGKS) is an ATP binding site. 6 consecutive transmembrane segments (helical) span residues 713 to 733 (VALG…SSIV), 762 to 781 (PLFI…HGFY), 837 to 857 (IGLK…GFIY), 858 to 878 (QWKL…CSLT), 938 to 958 (IIAG…YALC), and 976 to 996 (VMIA…AGAF). An ABC transmembrane type-1 2 domain is found at 713 to 1002 (VALGILSSVV…AGAFATKLAD (290 aa)). Residues 1036–1274 (IEYRNVQFIY…GGEYKTRYDL (239 aa)) form the ABC transporter 2 domain. ATP is bound at residue 1071 to 1078 (GQTGCGKS). N-linked (GlcNAc...) asparagine glycosylation is present at N1113.

Belongs to the ABC transporter superfamily. ABCB family. Multidrug resistance exporter (TC 3.A.1.201) subfamily.

It is found in the membrane. The enzyme catalyses ATP + H2O + xenobioticSide 1 = ADP + phosphate + xenobioticSide 2.. Functionally, energy-dependent efflux pump responsible for decreased drug accumulation in multi-drug-resistant cells. Confers vinblastine resistance. This is Multidrug resistance protein 1 (MDR1) from Leishmania enriettii.